A 786-amino-acid chain; its full sequence is Protein translocase subunit SecA 1 (786 aa).

Residues Gln-85, 103–107, and Asp-491 contribute to the ATP site; that span reads GEGKT.

The protein belongs to the SecA family. As to quaternary structure, monomer and homodimer. Part of the essential Sec protein translocation apparatus which comprises SecA, SecYEG and auxiliary proteins SecDF. Other proteins may also be involved.

It localises to the cell membrane. Its subcellular location is the cytoplasm. The catalysed reaction is ATP + H2O + cellular proteinSide 1 = ADP + phosphate + cellular proteinSide 2.. Part of the Sec protein translocase complex. Interacts with the SecYEG preprotein conducting channel. Has a central role in coupling the hydrolysis of ATP to the transfer of proteins into and across the cell membrane, serving as an ATP-driven molecular motor driving the stepwise translocation of polypeptide chains across the membrane. The polypeptide is Protein translocase subunit SecA 1 (Pediococcus pentosaceus (strain ATCC 25745 / CCUG 21536 / LMG 10740 / 183-1w)).